The chain runs to 209 residues: Ribosomal RNA small subunit methyltransferase G (209 aa).

Residues G77, M82, V128–E129, and R143 each bind S-adenosyl-L-methionine.

It belongs to the methyltransferase superfamily. RNA methyltransferase RsmG family.

The protein localises to the cytoplasm. It carries out the reaction guanosine(527) in 16S rRNA + S-adenosyl-L-methionine = N(7)-methylguanosine(527) in 16S rRNA + S-adenosyl-L-homocysteine. Functionally, specifically methylates the N7 position of guanine in position 527 of 16S rRNA. This chain is Ribosomal RNA small subunit methyltransferase G, found in Chromobacterium violaceum (strain ATCC 12472 / DSM 30191 / JCM 1249 / CCUG 213 / NBRC 12614 / NCIMB 9131 / NCTC 9757 / MK).